The chain runs to 334 residues: MRYVKLHSEYFPEFFNRLKEVGRVYGPVRHNSTYRFEEVNSIDELSLDYTRTILPPKKFFIRPRDAMFKIQKNEVTEVDGDGKFVLFGVHSCDIHGIKILDKVYLSNPPDPYYERRRKNAFIVGISCMPDEYCFCKSLGTDFAMDGFDIFLHELPDGWLVRVGSVKGHEFVWENQDIFDDVTEEDLRNFKEFEEKRAKAFKKSLNKEGLADILDLAFTSKVWKKYAEKCLGCGNCTIVCPTCRCYEVCDTWVRAYEALRMRRYDSCFMPTHGLVAGGHNFRPTRLDRFRHRYYCKNYFDPEAGFNCVGCGRCDEFCPARIEHVKVLDEVREGLI.

2 consecutive 4Fe-4S ferredoxin-type domains span residues 220–250 (KVWKKYAEKCLGCGNCTIVCPTCRCYEVCDT) and 294–328 (CKNYFDPEAGFNCVGCGRCDEFCPARIEHVKVLDE). [4Fe-4S] cluster is bound by residues cysteine 229, cysteine 232, cysteine 235, cysteine 239, cysteine 306, cysteine 309, cysteine 312, and cysteine 316.

In terms of assembly, dimer of heterotetramer of alpha, beta, gamma and delta subunits. The nickel-containing alpha and delta subunits constitute the hydrogenase activity. The beta and gamma subunits (flavin-containing dimer) constitute the sulfur reductase activity. [4Fe-4S] cluster serves as cofactor.

The protein resides in the cytoplasm. It catalyses the reaction n sulfur + H2 = (n-1) sulfur + hydrogen sulfide + H(+). Its function is as follows. Part of a bifunctional enzyme complex that functions as a hydrogen-evolving hydrogenase with sulfur-reducing activity. May play a role in hydrogen cycling during fermentative growth. Activity exhibited with NAD in addition to NADPH. The beta and gamma subunits form the sulfur-reducing component that catalyzes the cytoplasmic production of hydrogen sulfide in the presence of elemental sulfur. The sequence is that of Sulfhydrogenase 2 subunit beta from Pyrococcus furiosus (strain ATCC 43587 / DSM 3638 / JCM 8422 / Vc1).